We begin with the raw amino-acid sequence, 130 residues long: MASNFTQFVLVNDGGTGNVTVAPSNFANGVAEWISSNSRSQAYKVTCSVRQSSAQNRKYTIKVEVPKVATQTVGGVELPVAAWRSYLNMELTIPIFATNSDCELIVKAMQGLLKDGNPIPSAIAANSGIY.

The viral RNA-binding stretch occupies residues 32-105 (EWISSNSRSQ…FATNSDCELI (74 aa)).

The protein belongs to the Leviviricetes capsid protein family. As to quaternary structure, homodimer. The capsid proteins form dimers that assemble by group of 5. Twelve such pentamers are linked together with free dimers. The homodimers binds to the viral RNA via an operator hairpin, but also to many other RNA sequences in the viral genome; this interaction probably shifts the virus from the replicative to the assembly phase and ensures specific encapsidation of the viral genome.

The protein resides in the virion. In terms of biological role, capsid protein self-assembles to form an icosahedral capsid with a T=3 symmetry, about 26 nm in diameter, and consisting of 89 capsid proteins dimers (178 capsid proteins). Involved in viral genome encapsidation through the interaction between a capsid protein dimer and the multiple packaging signals present in the RNA genome. The capsid also contains 1 copy of the A2 maturation protein. Its function is as follows. Acts as a translational repressor of viral replicase synthesis late in infection. This latter function is the result of capsid protein interaction with an RNA hairpin which contains the replicase ribosome-binding site. The sequence is that of Capsid protein from Enterobacteria phage ZR (Bacteriophage ZR).